Here is a 496-residue protein sequence, read N- to C-terminus: MFAKATRNFLREVDADGDLIAVSNLNDSDKLQLLSLVTKKKRFWCWQRPKYQFLSLTLGDVLIEDQFPSPVVVESDFVKYEGKFANHVSGTLETALGKVKLNLGGSSRVESQSSFGTLRKQEVDLQQLIRDSAERTINLRNPVLQQVLEGRNEVLCVLTQKITTMQKCVISEHMQVEEKCGGIVGIQTKTVQVSATEDGNVTKDSNVVLEIPAATTIAYGVIELYVKLDGQFEFCLLRGKQGGFENKKRIDSVYLDPLVFREFAFIDMPDAAHGISSQDGPLSVLKQATLLLERNFHPFAELPEPQQTALSDIFQAVLFDDELLMVLEPVCDDLVSGLSPTVAVLGELKPRQQQDLVAFLQLVGCSLQGGCPGPEDAGSKQLFMTAYFLVSALAEMPDSAAALLGTCCKLQIIPTLCHLLRALSDDGVSDLEDPTLTPLKDTERFGIVQRLFASADISLERLKSSVKAVILKDSKVFPLLLCITLNGLCALGREHS.

The interval 1–56 is membrane targeting domain; the sequence is MFAKATRNFLREVDADGDLIAVSNLNDSDKLQLLSLVTKKKRFWCWQRPKYQFLSL. C45 is subject to S-(2-succinyl)cysteine. Residue K120 forms a Glycyl lysine isopeptide (Lys-Gly) (interchain with G-Cter in ubiquitin) linkage. Residues C156, C168, and C180 each carry the S-(2-succinyl)cysteine modification. A Glycyl lysine isopeptide (Lys-Gly) (interchain with G-Cter in ubiquitin) cross-link involves residue K189. Residues C235, C371, C408, C417, and C489 each carry the S-(2-succinyl)cysteine modification.

Belongs to the gasdermin family. In terms of assembly, homooligomer; homooligomeric ring-shaped pore complex containing 27-28 subunits when inserted in the membrane. In terms of processing, cleavage at Asp-270 by CASP3 (mature and uncleaved precursor forms) or granzyme B (GZMB) relieves autoinhibition and is sufficient to initiate pyroptosis. Post-translationally, succination by the Krebs cycle intermediate fumarate, which leads to S-(2-succinyl)cysteine residues, inhibits processing by caspases, and ability to initiate pyroptosis. Succination modification is catalyzed by a non-enzymatic reaction caused by an accumulation of fumarate. Ubiquitinated at Lys-120 and Lys-189 via 'Lys-48'-linked polyubiquitin chains, leading to proteasomal degradation. Deubiquitinated by USP48, leading to increased stability. In terms of processing, palmitoylated. Expressed in cochlea. Low level of expression in heart, brain, placenta, lung, liver, skeletal muscle, kidney and pancreas, with highest expression in placenta.

The protein localises to the cell membrane. Its subcellular location is the cytoplasm. It localises to the cytosol. With respect to regulation, the full-length protein before cleavage is inactive: intramolecular interactions between N- and C-terminal domains mediate autoinhibition in the absence of activation signal. The intrinsic pyroptosis-inducing activity is carried by the released N-terminal moiety (Gasdermin-E, N-terminal) following cleavage by CASP3 or granzyme B (GZMB). Activated by NLRP1 in the absence of GSDMD expression: NLRP1 cleaves and activates CASP8, promoting downstream activation of CASP3 and subsequent activation of GSDME. Its activity is regulated as follows. (Microbial infection) Activated upon human coronavirus SARS-CoV-2 infection, leading to lung epithelial cell death. Activation takes place in response to (1) activation of NLRP1 and (2) inactivation of GSDMD following NLRP1 and GSDMD cleavage by the SARS-CoV-2 3C-like proteinase nsp5. In terms of biological role, precursor of a pore-forming protein that converts non-inflammatory apoptosis to pyroptosis. This form constitutes the precursor of the pore-forming protein: upon cleavage, the released N-terminal moiety (Gasdermin-E, N-terminal) binds to membranes and forms pores, triggering pyroptosis. Pore-forming protein produced by cleavage by CASP3 or granzyme B (GZMB), which converts non-inflammatory apoptosis to pyroptosis or promotes granzyme-mediated pyroptosis, respectively. After cleavage, moves to the plasma membrane, homooligomerizes within the membrane and forms pores of 10-15 nanometers (nm) of inner diameter, allowing the release of mature interleukins (IL1B and IL16) and triggering pyroptosis. Binds to inner leaflet lipids, bisphosphorylated phosphatidylinositols, such as phosphatidylinositol (4,5)-bisphosphate. Cleavage by CASP3 switches CASP3-mediated apoptosis induced by TNF or danger signals, such as chemotherapy drugs, to pyroptosis. Mediates secondary necrosis downstream of the mitochondrial apoptotic pathway and CASP3 activation as well as in response to viral agents. Exhibits bactericidal activity. Cleavage by GZMB promotes tumor suppressor activity by triggering robust anti-tumor immunity. Suppresses tumors by mediating granzyme-mediated pyroptosis in target cells of natural killer (NK) cells: cleavage by granzyme B (GZMB), delivered to target cells from NK-cells, triggers pyroptosis of tumor cells and tumor suppression. May play a role in the p53/TP53-regulated cellular response to DNA damage. Functionally, (Microbial infection) Pore-forming protein, which promotes maternal placental pyroptosis in response to Zika virus infection, contributing to adverse fetal outcomes. The sequence is that of Gasdermin-E from Homo sapiens (Human).